Here is a 171-residue protein sequence, read N- to C-terminus: Der GTPase-activating protein YihI (171 aa).

Disordered regions lie at residues 1–99 and 145–171; these read MKKP…QAEL and LSYDDDEEDDEEDEKQEDMMRLLRGGN. The span at 20–30 shows a compositional bias: basic and acidic residues; sequence TREELNQEARD. Basic residues predominate over residues 31–40; sequence RKRLKKHRGH. Positions 147–160 are enriched in acidic residues; it reads YDDDEEDDEEDEKQ.

Belongs to the YihI family. In terms of assembly, interacts with Der.

A GTPase-activating protein (GAP) that modifies Der/EngA GTPase function. May play a role in ribosome biogenesis. This is Der GTPase-activating protein YihI from Salmonella agona (strain SL483).